The primary structure comprises 281 residues: Phosphonates import ATP-binding protein PhnC (281 aa).

Residues 2–245 (FELKDVTRRF…AVKEIYGTDK (244 aa)) enclose the ABC transporter domain. 34–41 (GRSGAGKS) lines the ATP pocket.

Belongs to the ABC transporter superfamily. Phosphonates importer (TC 3.A.1.9.1) family. The complex is composed of two ATP-binding proteins (PhnC), two transmembrane proteins (PhnE) and a solute-binding protein (PhnD).

The protein resides in the cell inner membrane. The catalysed reaction is phosphonate(out) + ATP + H2O = phosphonate(in) + ADP + phosphate + H(+). Part of the ABC transporter complex PhnCDE involved in phosphonates import. Responsible for energy coupling to the transport system. This chain is Phosphonates import ATP-binding protein PhnC, found in Rhizobium etli (strain ATCC 51251 / DSM 11541 / JCM 21823 / NBRC 15573 / CFN 42).